A 768-amino-acid chain; its full sequence is MKLLWQAKMSSIQDWGEEVEEGAVYHVTLKRVQIQQAANKGARWLGVEGDQLPPGHTVSQYETCKIRTIKAGTLEKLVENLLTAFGDNDFTYISIFLSTYRGFASTKEVLELLLDRYGNLTGPNCEDDGSQSSPESKAVIRNAIASILRAWLDQCAEDFREPPHFPCLQKLLEYLKQMMPGSDPERRAQNLLEQFQKQDVDSDNGLLNTSSFSLEEEEELESGGSAEFTNFSEDLVAEQLTYMDAQLFKKVVPHHCLGCIWSQRDKKENKHLAPTIRATISQFNTLTKCVVSTVLGSKELKTQQRARVIEKWINIAHECRILKNFSSLRAIVSALQSNSIYRLKKAWAAVPKDRMLMFEELSDIFSDHNNHLTSRELLMKEGTSKFANLDSSVKENQKRTQRRLQLQKDMGVMQGTVPYLGTFLTDLTMLDTALQDYIEGGLINFEKRRREFEVIAQIKLLQSACNSYCMGPDQKFIQWFQRQQLLSEEESYALSCEIEAAADANTTSPKPRKSMVKRLSLLFLGSDIIPGSTPTKEQPKSAASGSSGESMDSVSVSSCESNHSEAEEGPVTPMDTPDEPQKKLSESSSSCSSIHSMDTNSSGMSSLINPLSSPPTCNNNPKIHKRSVSVTSITSTVLPPVYNQQNEDTCIIRISVEDNNGNMYKSIMLTSQDKTPAVIQRAMSKHNLESDPAEEYELVQVISEDKELVIPDSANVFYAMNSQVNFDFILRKKNSVEEQVKLRSRTSLTLPRTAKRGCWSNRHSKITL.

The 132-residue stretch at 65–196 folds into the N-terminal Ras-GEF domain; that stretch reads KIRTIKAGTL…RAQNLLEQFQ (132 aa). In terms of domain architecture, Ras-GEF spans 232–501; sequence SEDLVAEQLT…YALSCEIEAA (270 aa). Residue S520 is modified to Phosphoserine. The interval 530-623 is disordered; sequence PGSTPTKEQP…PPTCNNNPKI (94 aa). 2 stretches are compositionally biased toward low complexity: residues 541–561 and 586–596; these read SAASGSSGESMDSVSVSSCES and ESSSSCSSIHS. Residues 597–621 show a composition bias toward polar residues; it reads MDTNSSGMSSLINPLSSPPTCNNNP. The 88-residue stretch at 648–735 folds into the Ras-associating domain; sequence DTCIIRISVE…FDFILRKKNS (88 aa).

As to quaternary structure, interacts with Ras.

Its function is as follows. Probable guanine nucleotide exchange factor. In Mus musculus (Mouse), this protein is Ral guanine nucleotide dissociation stimulator-like 1 (Rgl1).